The primary structure comprises 1119 residues: G8 domain-containing protein DDB_G0288475 (1119 aa).

Residues 1-22 form the signal peptide; it reads MKYSSFLLLFIYIFFILNNINA. The G8 domain maps to 276–404; that stretch reads TIWTSGVVPL…YHNTWTKLAA (129 aa). Residues asparagine 308, asparagine 559, asparagine 736, asparagine 854, asparagine 968, asparagine 1035, asparagine 1056, and asparagine 1070 are each glycosylated (N-linked (GlcNAc...) asparagine).

It belongs to the comF family.

The protein resides in the secreted. The chain is G8 domain-containing protein DDB_G0288475 from Dictyostelium discoideum (Social amoeba).